The primary structure comprises 392 residues: NDP-glycosyltransferase YjiC (392 aa).

UDP-binding positions include Asn18, Thr229, Ser255, Val278, His293, and Asn297–Glu301.

It belongs to the UDP-glycosyltransferase family. In terms of assembly, monomer.

It carries out the reaction an NDP-glycose + an acceptor = a glycosylated acceptor + NDP.. With respect to regulation, activity is improved in the presence of Mn(2+), Mg(2+) and Ca(2+), and inhibited by Ni(2+), Zn(2+) and Cu(2+). Functionally, glycosyltransferase that can glycosylate a wide range of substrates, including various flavonoids, phenyl ketones, curcuminoid, lignins, zingerone, triterpenes, stilbene and anthraquinone, using UDP-glucose or ADP-glucose as sugar donor. It also exhibits O-, N- and S-glycosylation activities towards simple aromatics. In vivo, the broad acceptor tolerance of YjiC might function as a detoxification agent against exogenous xenobiotics to make the strain adaptable to the changeable environment. The chain is NDP-glycosyltransferase YjiC (yjiC) from Bacillus subtilis (strain 168).